Consider the following 105-residue polypeptide: MIASKFGIGQQVRHSLLGYLGVVVDIDPVYSLAEPSPDELAVNDELRAAPWYHVVMEDDNGLPIHTYLAEAQLSSEMREEHPEQPSMDELARTIRKQLQAPRLRN.

It belongs to the HspQ family.

It localises to the cytoplasm. Involved in the degradation of certain denaturated proteins, including DnaA, during heat shock stress. This chain is Heat shock protein HspQ, found in Escherichia fergusonii (strain ATCC 35469 / DSM 13698 / CCUG 18766 / IAM 14443 / JCM 21226 / LMG 7866 / NBRC 102419 / NCTC 12128 / CDC 0568-73).